Here is a 184-residue protein sequence, read N- to C-terminus: Photosystem I assembly protein Ycf4 (184 aa).

2 consecutive transmembrane segments (helical) span residues 19-39 (ISNFCWAFILFLGSLGFLLVG) and 57-77 (IVFFPQGIVMSFYGIAGLFIS).

This sequence belongs to the Ycf4 family.

The protein localises to the plastid. It is found in the chloroplast thylakoid membrane. Functionally, seems to be required for the assembly of the photosystem I complex. The sequence is that of Photosystem I assembly protein Ycf4 from Nicotiana tomentosiformis (Tobacco).